Here is a 439-residue protein sequence, read N- to C-terminus: Nuclear distribution protein PAC1 (439 aa).

Residues 55 to 90 (NSIVRLQSKIMELEKNCEELQKSIDEQQSSTNQISN) adopt a coiled-coil conformation. 7 WD repeats span residues 106 to 145 (TLDASITALCLHPSLPIIFIGLDSGKLLRYDILNVELPLQ), 149 to 193 (AHMD…TLSH), 199 to 240 (GHEH…CIKS), 243 to 282 (PHTQWIRSLHVHGEFVLTGSNDSAIRLTHWPSGNGLSMGI), 295 to 335 (IPDP…FIPH), 355 to 392 (DHNSWVRDLRQFNDMLFSCSDDGSVKCWSLDWTNLSTT), and 402 to 438 (NKGFQNCLTLDNIAFTGLPSRKLLFSGSSEGTLTSFM).

Belongs to the WD repeat LIS1/nudF family. In terms of assembly, self-associates. Interacts with NDL1 and dynein.

It is found in the cytoplasm. It localises to the cytoskeleton. Its subcellular location is the spindle pole. In terms of biological role, positively regulates the activity of the minus-end directed microtubule motor protein dynein. Plays a central role in positioning the mitotic spindle at the bud neck during cell division. Targets cytoplasmic dynein to microtubule plus ends, thereby promoting dynein-mediated microtubule sliding along the bud cortex and consequently the movement of the mitotic spindle to the bud neck. This Kluyveromyces lactis (strain ATCC 8585 / CBS 2359 / DSM 70799 / NBRC 1267 / NRRL Y-1140 / WM37) (Yeast) protein is Nuclear distribution protein PAC1.